Here is a 195-residue protein sequence, read N- to C-terminus: Inner membrane-spanning protein YciB (195 aa).

The next 5 helical transmembrane spans lie at 34–54 (IYGA…ALWL), 65–85 (FTLG…EDTF), 88–108 (WKAP…HFIG), 131–151 (LNIA…YVVF), and 160–180 (FKVF…GLFL).

The protein belongs to the YciB family.

The protein resides in the cell inner membrane. Functionally, plays a role in cell envelope biogenesis, maintenance of cell envelope integrity and membrane homeostasis. This is Inner membrane-spanning protein YciB from Pseudomonas aeruginosa (strain LESB58).